The following is a 226-amino-acid chain: Orotate phosphoribosyltransferase (226 aa).

Residues Lys26, 73-74, Arg100, Lys101, Lys104, His106, and 128-136 contribute to the 5-phospho-alpha-D-ribose 1-diphosphate site; these read YK and EDVTTSGKS. 2 residues coordinate orotate: Thr132 and Arg161.

The protein belongs to the purine/pyrimidine phosphoribosyltransferase family. PyrE subfamily. In terms of assembly, homodimer. Mg(2+) serves as cofactor.

The enzyme catalyses orotidine 5'-phosphate + diphosphate = orotate + 5-phospho-alpha-D-ribose 1-diphosphate. It functions in the pathway pyrimidine metabolism; UMP biosynthesis via de novo pathway; UMP from orotate: step 1/2. Functionally, catalyzes the transfer of a ribosyl phosphate group from 5-phosphoribose 1-diphosphate to orotate, leading to the formation of orotidine monophosphate (OMP). This Agathobacter rectalis (strain ATCC 33656 / DSM 3377 / JCM 17463 / KCTC 5835 / VPI 0990) (Eubacterium rectale) protein is Orotate phosphoribosyltransferase.